The chain runs to 529 residues: Peptide chain release factor 3 (529 aa).

One can recognise a tr-type G domain in the interval 11–280; it reads AKRRTFAIIS…GLVEWAPAPM (270 aa). GTP contacts are provided by residues 20–27, 88–92, and 142–145; these read SHPDAGKT, DTPGH, and NKLD.

Belongs to the TRAFAC class translation factor GTPase superfamily. Classic translation factor GTPase family. PrfC subfamily.

Its subcellular location is the cytoplasm. Functionally, increases the formation of ribosomal termination complexes and stimulates activities of RF-1 and RF-2. It binds guanine nucleotides and has strong preference for UGA stop codons. It may interact directly with the ribosome. The stimulation of RF-1 and RF-2 is significantly reduced by GTP and GDP, but not by GMP. The protein is Peptide chain release factor 3 of Escherichia coli O8 (strain IAI1).